We begin with the raw amino-acid sequence, 374 residues long: Ribosomal RNA large subunit methyltransferase G (374 aa).

It belongs to the methyltransferase superfamily. RlmG family.

Its subcellular location is the cytoplasm. The catalysed reaction is guanosine(1835) in 23S rRNA + S-adenosyl-L-methionine = N(2)-methylguanosine(1835) in 23S rRNA + S-adenosyl-L-homocysteine + H(+). In terms of biological role, specifically methylates the guanine in position 1835 (m2G1835) of 23S rRNA. The sequence is that of Ribosomal RNA large subunit methyltransferase G from Photobacterium profundum (strain SS9).